The sequence spans 72 residues: Subtilisin-chymotrypsin inhibitor-2B (72 aa).

The protein belongs to the protease inhibitor I13 (potato type I serine protease inhibitor) family.

Its function is as follows. Inhibits both subtilisin and chymotrypsin. The polypeptide is Subtilisin-chymotrypsin inhibitor-2B (Hordeum vulgare (Barley)).